The chain runs to 843 residues: Ribosome biogenesis protein ERB1 (843 aa).

Disordered regions lie at residues 36–189 (KKAA…RYIY) and 364–419 (ADES…REYL). Composition is skewed to acidic residues over residues 77–92 (VDED…YDLE), 106–139 (SDSE…EVPS), and 163–172 (ESNDLSDDNE). A compositionally biased stretch (basic and acidic residues) spans 173 to 183 (PNYRIEKDANG). A compositionally biased stretch (pro residues) spans 379–396 (PKLPPPGYEESYHPPPEY). The span at 397-406 (LPDKKEKEEW) shows a compositional bias: basic and acidic residues. WD repeat units follow at residues 487–526 (GHRG…QLWS), 530–570 (SDED…LELE), 668–706 (KGGG…LVKI), 709–754 (PGAR…RPYK), 758–797 (YHQK…DLLS), and 813–843 (TGDL…RLWM).

It belongs to the WD repeat BOP1/ERB1 family. As to quaternary structure, component of the NOP7 complex, composed of ERB1, NOP7 and YTM1. The complex is held together by ERB1, which interacts with NOP7 via its N-terminal domain and with YTM1 via a high-affinity interaction between the seven-bladed beta-propeller domains of the 2 proteins. The NOP7 complex associates with the 66S pre-ribosome.

The protein localises to the nucleus. It is found in the nucleolus. The protein resides in the nucleoplasm. Its function is as follows. Component of the NOP7 complex, which is required for maturation of the 25S and 5.8S ribosomal RNAs and formation of the 60S ribosome. The protein is Ribosome biogenesis protein ERB1 of Coccidioides immitis (strain RS) (Valley fever fungus).